A 227-amino-acid chain; its full sequence is tRNA (guanine-N(7)-)-methyltransferase (227 aa).

The S-adenosyl-L-methionine site is built by E60, E85, D112, and D135. D135 is a catalytic residue. Substrate contacts are provided by residues K139, D171, and 206-209 (TKFE).

This sequence belongs to the class I-like SAM-binding methyltransferase superfamily. TrmB family.

The catalysed reaction is guanosine(46) in tRNA + S-adenosyl-L-methionine = N(7)-methylguanosine(46) in tRNA + S-adenosyl-L-homocysteine. It participates in tRNA modification; N(7)-methylguanine-tRNA biosynthesis. Its function is as follows. Catalyzes the formation of N(7)-methylguanine at position 46 (m7G46) in tRNA. This is tRNA (guanine-N(7)-)-methyltransferase from Thiobacillus denitrificans (strain ATCC 25259 / T1).